The following is a 99-amino-acid chain: A-type ATP synthase subunit F (99 aa).

The protein belongs to the V-ATPase F subunit family. As to quaternary structure, has multiple subunits with at least A(3), B(3), C, D, E, F, H, I and proteolipid K(x).

The protein localises to the cell membrane. Component of the A-type ATP synthase that produces ATP from ADP in the presence of a proton gradient across the membrane. The protein is A-type ATP synthase subunit F of Methanococcus vannielii (strain ATCC 35089 / DSM 1224 / JCM 13029 / OCM 148 / SB).